The primary structure comprises 209 residues: Thiamine-phosphate synthase (209 aa).

4-amino-2-methyl-5-(diphosphooxymethyl)pyrimidine contacts are provided by residues 37–41 (QYRDK) and Asn69. Residues Asp70 and Asp89 each coordinate Mg(2+). Position 108 (Ser108) interacts with 4-amino-2-methyl-5-(diphosphooxymethyl)pyrimidine. 135–137 (SPT) is a binding site for 2-[(2R,5Z)-2-carboxy-4-methylthiazol-5(2H)-ylidene]ethyl phosphate. A 4-amino-2-methyl-5-(diphosphooxymethyl)pyrimidine-binding site is contributed by Lys138. Residues Gly165 and 185–186 (VS) contribute to the 2-[(2R,5Z)-2-carboxy-4-methylthiazol-5(2H)-ylidene]ethyl phosphate site.

This sequence belongs to the thiamine-phosphate synthase family. Requires Mg(2+) as cofactor.

The catalysed reaction is 2-[(2R,5Z)-2-carboxy-4-methylthiazol-5(2H)-ylidene]ethyl phosphate + 4-amino-2-methyl-5-(diphosphooxymethyl)pyrimidine + 2 H(+) = thiamine phosphate + CO2 + diphosphate. It carries out the reaction 2-(2-carboxy-4-methylthiazol-5-yl)ethyl phosphate + 4-amino-2-methyl-5-(diphosphooxymethyl)pyrimidine + 2 H(+) = thiamine phosphate + CO2 + diphosphate. It catalyses the reaction 4-methyl-5-(2-phosphooxyethyl)-thiazole + 4-amino-2-methyl-5-(diphosphooxymethyl)pyrimidine + H(+) = thiamine phosphate + diphosphate. The protein operates within cofactor biosynthesis; thiamine diphosphate biosynthesis; thiamine phosphate from 4-amino-2-methyl-5-diphosphomethylpyrimidine and 4-methyl-5-(2-phosphoethyl)-thiazole: step 1/1. In terms of biological role, condenses 4-methyl-5-(beta-hydroxyethyl)thiazole monophosphate (THZ-P) and 2-methyl-4-amino-5-hydroxymethyl pyrimidine pyrophosphate (HMP-PP) to form thiamine monophosphate (TMP). The sequence is that of Thiamine-phosphate synthase from Halorhodospira halophila (strain DSM 244 / SL1) (Ectothiorhodospira halophila (strain DSM 244 / SL1)).